A 134-amino-acid polypeptide reads, in one-letter code: NADH-quinone oxidoreductase subunit A (134 aa).

The next 3 helical transmembrane spans lie at 12-32 (FAIY…LAAL), 64-84 (FYLV…LFAW), and 93-113 (WVGF…LVYL).

The protein belongs to the complex I subunit 3 family. As to quaternary structure, NDH-1 is composed of 13 different subunits. Subunits NuoA, H, J, K, L, M, N constitute the membrane sector of the complex.

It localises to the cell inner membrane. The enzyme catalyses a quinone + NADH + 5 H(+)(in) = a quinol + NAD(+) + 4 H(+)(out). In terms of biological role, NDH-1 shuttles electrons from NADH, via FMN and iron-sulfur (Fe-S) centers, to quinones in the respiratory chain. The immediate electron acceptor for the enzyme in this species is believed to be ubiquinone. Couples the redox reaction to proton translocation (for every two electrons transferred, four hydrogen ions are translocated across the cytoplasmic membrane), and thus conserves the redox energy in a proton gradient. The polypeptide is NADH-quinone oxidoreductase subunit A (Shewanella oneidensis (strain ATCC 700550 / JCM 31522 / CIP 106686 / LMG 19005 / NCIMB 14063 / MR-1)).